Reading from the N-terminus, the 969-residue chain is Vacuolar membrane protease (969 aa).

Residues 1-12 are Cytoplasmic-facing; sequence MTRVNSIIGFRP. A helical transmembrane segment spans residues 13–33; sequence IPVTLLTVITYVSLFSALLFI. Over 34–381 the chain is Vacuolar; sequence DRQPPAVAKK…RAFSVLHLHT (348 aa). The N-linked (GlcNAc...) asparagine glycan is linked to Asn-125. His-166 and Asp-178 together coordinate Zn(2+). The active-site Proton acceptor is Glu-216. Residues Glu-217, Glu-242, and His-315 each coordinate Zn(2+). The N-linked (GlcNAc...) asparagine glycan is linked to Asn-355. A helical membrane pass occupies residues 382–402; that stretch reads IFAFTITLIVVPFVVVLVAMW. The Cytoplasmic segment spans residues 403-438; sequence ALGHFDKLYFFSNTAYIPPPPEHSIASRTTQGWRGV. The helical transmembrane segment at 439–459 threads the bilayer; it reads LRFPVAFVAASAGVVGMAFLI. The Vacuolar segment spans residues 460–469; it reads NKINPMVVYA. The chain crosses the membrane as a helical span at residues 470 to 490; the sequence is SQYTVWTCFLSTWWIIAWVIL. At 491–505 the chain is on the cytoplasmic side; the sequence is RGADAVRPTALARGY. A helical transmembrane segment spans residues 506-526; sequence GFLEQWLLWLVAMIGVAISIG. The Vacuolar portion of the chain corresponds to 527 to 531; that stretch reads KSHLG. The chain crosses the membrane as a helical span at residues 532 to 552; the sequence is SGYWVLVFYSGFFTSAFISLL. Residues 553–662 lie on the Cytoplasmic side of the membrane; sequence EMAALQKKSE…WSKDLPSWTW (110 aa). Residues 571-629 are disordered; that stretch reads DQAYPPEEHSQTGASGNISNRAANDDDDAGEHATEETPLFRGPNRPLSFAPHRNPRYDN. Residues 581-592 are compositionally biased toward polar residues; sequence QTGASGNISNRA. The chain crosses the membrane as a helical span at residues 663–683; that stretch reads ILQFLATVPLQLVLAGSVALL. Topologically, residues 684–698 are vacuolar; the sequence is LGNALAQTGADGSDM. The chain crosses the membrane as a helical span at residues 699–719; sequence LTVLLGFGVFSIILLLPVAPF. Topologically, residues 720-727 are cytoplasmic; that stretch reads LHRITYHV. Residues 728–748 form a helical membrane-spanning segment; sequence TLFIFVIFVGTFIYNLAAPPF. The Vacuolar portion of the chain corresponds to 749-969; the sequence is SPNARLKVYF…LVEGSVPFMI (221 aa). The N-linked (GlcNAc...) asparagine glycan is linked to Asn-840.

It belongs to the peptidase M28 family. The cofactor is Zn(2+).

The protein resides in the vacuole membrane. Its function is as follows. May be involved in vacuolar sorting and osmoregulation. This chain is Vacuolar membrane protease, found in Tuber melanosporum (strain Mel28) (Perigord black truffle).